A 317-amino-acid chain; its full sequence is UV DNA damage endonuclease (317 aa).

Belongs to the uve1/UvsE family.

Component in a DNA repair pathway. Removal of UV LIGHT damaged nucleotides. Recognizes pyrimidine dimers and cleave a phosphodiester bond immediately 5' to the lesion. The polypeptide is UV DNA damage endonuclease (Bacillus cereus (strain B4264)).